A 146-amino-acid polypeptide reads, in one-letter code: Basic phospholipase A2 beta-bungarotoxin A1 chain (146 aa).

A signal peptide spans 1–19 (MNPAHLLVLPAVCVSFLGA). Positions 20–27 (SIIPPQSL) are excised as a propeptide. 6 disulfide bridges follow: C54-C145, C56-C72, C71-C126, C78-C119, C87-C112, and C105-C117. Ca(2+) contacts are provided by Y55, G57, and G59. H75 is an active-site residue. Residue D76 coordinates Ca(2+). D120 is an active-site residue.

Belongs to the phospholipase A2 family. Group I subfamily. D49 sub-subfamily. Heterodimer with beta-bungarotoxin B chain; disulfide-linked. The A chain has phospholipase A2 activity and the B chain shows homology with the basic protease inhibitors. It depends on Ca(2+) as a cofactor. As to expression, expressed by the venom gland.

Its subcellular location is the secreted. The catalysed reaction is a 1,2-diacyl-sn-glycero-3-phosphocholine + H2O = a 1-acyl-sn-glycero-3-phosphocholine + a fatty acid + H(+). Functionally, snake venom phospholipase A2 (PLA2) that inhibits neuromuscular transmission by blocking acetylcholine release from the nerve termini. PLA2 catalyzes the calcium-dependent hydrolysis of the 2-acyl groups in 3-sn-phosphoglycerides. This Bungarus flaviceps flaviceps (Red-headed krait) protein is Basic phospholipase A2 beta-bungarotoxin A1 chain.